A 396-amino-acid polypeptide reads, in one-letter code: Probable porphobilinogen deaminase (396 aa).

The segment at 159 to 224 (APALHREHER…DTASSSEFEQ (66 aa)) is disordered. The tract at residues 159-245 (APALHREHER…LQQSAMERDP (87 aa)) is insert. The span at 162–189 (LHREHERRTEAEKEAQSRDAREQRRGDY) shows a compositional bias: basic and acidic residues. Residues 200–215 (LDTEDGEEGAADDGDD) show a composition bias toward acidic residues. An S-(dipyrrolylmethanemethyl)cysteine modification is found at Cys328.

The protein belongs to the HMBS family. Dipyrromethane serves as cofactor.

It catalyses the reaction 4 porphobilinogen + H2O = hydroxymethylbilane + 4 NH4(+). It participates in porphyrin-containing compound metabolism; protoporphyrin-IX biosynthesis; coproporphyrinogen-III from 5-aminolevulinate: step 2/4. Its function is as follows. Tetrapolymerization of the monopyrrole PBG into the hydroxymethylbilane pre-uroporphyrinogen in several discrete steps. This is Probable porphobilinogen deaminase (hemC) from Halobacterium salinarum (strain ATCC 700922 / JCM 11081 / NRC-1) (Halobacterium halobium).